The sequence spans 37 residues: Large ribosomal subunit protein bL36 (37 aa).

The protein belongs to the bacterial ribosomal protein bL36 family.

In Magnetococcus marinus (strain ATCC BAA-1437 / JCM 17883 / MC-1), this protein is Large ribosomal subunit protein bL36.